We begin with the raw amino-acid sequence, 137 residues long: Translation initiation factor 2 subunit beta (137 aa).

The protein belongs to the eIF-2-beta/eIF-5 family. As to quaternary structure, heterotrimer composed of an alpha, a beta and a gamma chain.

In terms of biological role, eIF-2 functions in the early steps of protein synthesis by forming a ternary complex with GTP and initiator tRNA. In Archaeoglobus fulgidus (strain ATCC 49558 / DSM 4304 / JCM 9628 / NBRC 100126 / VC-16), this protein is Translation initiation factor 2 subunit beta (eif2b).